The primary structure comprises 1196 residues: Nucleolar protein 6 (1196 aa).

Disordered stretches follow at residues 1-74 (MPGK…NVKP) and 1140-1196 (KREQ…KALK). Composition is skewed to basic and acidic residues over residues 22–31 (HAEDHSDLEH) and 65–74 (HRGDTKNVKP). Positions 1165 to 1187 (KPKKHGKRKGTGKAAPPKKKRLI) are enriched in basic residues.

This sequence belongs to the NRAP family. Part of the small subunit (SSU) processome, composed of more than 70 proteins and the RNA chaperone small nucleolar RNA (snoRNA) U3.

The protein localises to the nucleus. It localises to the nucleolus. It is found in the chromosome. Functionally, part of the small subunit (SSU) processome, first precursor of the small eukaryotic ribosomal subunit. During the assembly of the SSU processome in the nucleolus, many ribosome biogenesis factors, an RNA chaperone and ribosomal proteins associate with the nascent pre-rRNA and work in concert to generate RNA folding, modifications, rearrangements and cleavage as well as targeted degradation of pre-ribosomal RNA by the RNA exosome. This Drosophila simulans (Fruit fly) protein is Nucleolar protein 6.